The primary structure comprises 857 residues: Leucine--tRNA ligase (857 aa).

The 'HIGH' region motif lies at 42-52 (PYPSGKLHMGH). The 'KMSKS' region signature appears at 620-624 (KMSKS). ATP is bound at residue K623.

The protein belongs to the class-I aminoacyl-tRNA synthetase family.

Its subcellular location is the cytoplasm. It carries out the reaction tRNA(Leu) + L-leucine + ATP = L-leucyl-tRNA(Leu) + AMP + diphosphate. In Thiobacillus denitrificans (strain ATCC 25259 / T1), this protein is Leucine--tRNA ligase.